A 485-amino-acid chain; its full sequence is Aspartyl/glutamyl-tRNA(Asn/Gln) amidotransferase subunit B (485 aa).

Belongs to the GatB/GatE family. GatB subfamily. As to quaternary structure, heterotrimer of A, B and C subunits.

It carries out the reaction L-glutamyl-tRNA(Gln) + L-glutamine + ATP + H2O = L-glutaminyl-tRNA(Gln) + L-glutamate + ADP + phosphate + H(+). The catalysed reaction is L-aspartyl-tRNA(Asn) + L-glutamine + ATP + H2O = L-asparaginyl-tRNA(Asn) + L-glutamate + ADP + phosphate + 2 H(+). Its function is as follows. Allows the formation of correctly charged Asn-tRNA(Asn) or Gln-tRNA(Gln) through the transamidation of misacylated Asp-tRNA(Asn) or Glu-tRNA(Gln) in organisms which lack either or both of asparaginyl-tRNA or glutaminyl-tRNA synthetases. The reaction takes place in the presence of glutamine and ATP through an activated phospho-Asp-tRNA(Asn) or phospho-Glu-tRNA(Gln). The protein is Aspartyl/glutamyl-tRNA(Asn/Gln) amidotransferase subunit B of Borrelia hermsii (strain HS1 / DAH).